Here is a 630-residue protein sequence, read N- to C-terminus: GATA-type transcription factor SRE1 (630 aa).

Disordered regions lie at residues 1–139 and 162–203; these read MTGL…TPLW and DRPT…RLTD. 3 stretches are compositionally biased toward polar residues: residues 66 to 82, 115 to 133, and 175 to 196; these read DNTQ…QLQN, KAQS…NCGT, and YGSS…TNDG. The GATA-type 1 zinc finger occupies 128–152; sequence CSNCGTKRTPLWRRSPTGATICNAC. The interval 219 to 237 is cystein-rich region (CRR); sequence CPGGGSCNGTGGAEGCDGC. The tract at residues 256–283 is disordered; it reads HTPRTSPQVSTQGGPGSTEGDAGSSNPE. The segment covering 258-267 has biased composition (polar residues); sequence PRTSPQVSTQ. The segment at 291–315 adopts a GATA-type 2 zinc-finger fold; sequence CQNCQTTVTPLWRRDENGHPICNAC. The disordered stretch occupies residues 339-609; that stretch reads KRVVPAMREQ…AKAERRARLQ (271 aa). Polar residues predominate over residues 349 to 363; it reads SPPSATQSSNGSVSP. Composition is skewed to low complexity over residues 436–447 and 492–503; these read NNHNNGETTNTH and SSSSASFPNNNP. Polar residues predominate over residues 504-513; the sequence is GRFNSISSLL. Residues 558–568 show a composition bias toward low complexity; that stretch reads SHSPPRFSPSL. The span at 595–609 shows a compositional bias: basic and acidic residues; the sequence is VDHRDAKAERRARLQ. The stretch at 595 to 630 forms a coiled coil; that stretch reads VDHRDAKAERRARLQREAQDMREALKAKERELALLE.

The protein localises to the nucleus. Functionally, GATA-type transcription repressor that regulates iron- acquisition genes through specific binding the GATA sequence element 5'-(G/A)ATC(T/A)GATAA-3' of target promoters in an iron- and zinc-dependent manner. Regulation occurs via direct binding of iron ions. Iron acquisition regulation is critical for survival under both iron-limiting conditions (to acquire essential iron) and iron-replete conditions (to limit iron toxicity). SRE1 targets include genes encoding a number of key iron-regulated factors such as those involved in siderophore biosynthesis, presumed ferric reductase activity, iron-responsive transcriptional regulation, oxidative stress response, as well as genes encoding a number of putative oxidoreductases, metabolic and mitochondrial enzymes, superoxide dismutase, and genes previously identified as induced during nitrosative stress. The sequence is that of GATA-type transcription factor SRE1 from Ajellomyces capsulatus (Darling's disease fungus).